Reading from the N-terminus, the 70-residue chain is Biotin carboxyl carrier protein of acetyl-CoA carboxylase (70 aa).

Residues 1–69 (GTVVAPMVGL…QDGIKLFALK (69 aa)) form the Biotinyl-binding domain. Residue Lys35 is modified to N6-biotinyllysine.

Its subcellular location is the plastid. The protein resides in the chloroplast. Its pathway is lipid metabolism; fatty acid biosynthesis. This protein is a component of the acetyl coenzyme A carboxylase complex; first, biotin carboxylase catalyzes the carboxylation of the carrier protein and then the transcarboxylase transfers the carboxyl group to form malonyl-CoA. This chain is Biotin carboxyl carrier protein of acetyl-CoA carboxylase, found in Solanum lycopersicum (Tomato).